A 227-amino-acid chain; its full sequence is DNA repair protein RecO (227 aa).

It belongs to the RecO family.

Functionally, involved in DNA repair and RecF pathway recombination. In Pseudomonas putida (strain W619), this protein is DNA repair protein RecO.